The primary structure comprises 95 residues: Co-chaperonin GroES (95 aa).

This sequence belongs to the GroES chaperonin family. Heptamer of 7 subunits arranged in a ring. Interacts with the chaperonin GroEL.

It localises to the cytoplasm. Its function is as follows. Together with the chaperonin GroEL, plays an essential role in assisting protein folding. The GroEL-GroES system forms a nano-cage that allows encapsulation of the non-native substrate proteins and provides a physical environment optimized to promote and accelerate protein folding. GroES binds to the apical surface of the GroEL ring, thereby capping the opening of the GroEL channel. The chain is Co-chaperonin GroES from Rhodobacter capsulatus (Rhodopseudomonas capsulata).